Consider the following 106-residue polypeptide: Large ribosomal subunit protein eL42 (106 aa).

This sequence belongs to the eukaryotic ribosomal protein eL42 family.

This Debaryomyces hansenii (strain ATCC 36239 / CBS 767 / BCRC 21394 / JCM 1990 / NBRC 0083 / IGC 2968) (Yeast) protein is Large ribosomal subunit protein eL42 (RPL44).